We begin with the raw amino-acid sequence, 172 residues long: Translationally-controlled tumor protein homolog (172 aa).

One can recognise a TCTP domain in the interval 1–172 (MIIYKDTVTE…FKDGLISEKC (172 aa)).

Belongs to the TCTP family.

It localises to the cytoplasm. Involved in calcium binding and microtubule stabilization. The chain is Translationally-controlled tumor protein homolog (tpt1) from Xenopus tropicalis (Western clawed frog).